A 283-amino-acid chain; its full sequence is Isochorismatase domain-containing protein 1 (283 aa).

Belongs to the isochorismatase family.

This chain is Isochorismatase domain-containing protein 1 (isoc1), found in Danio rerio (Zebrafish).